Here is a 301-residue protein sequence, read N- to C-terminus: Tyrosine recombinase XerD (301 aa).

Residues 6 to 89 (PLHQQLIEQF…ALKVFFHFLK (84 aa)) enclose the Core-binding (CB) domain. Residues 108 to 293 (RLPSILSTEE…ASESIIEKFH (186 aa)) enclose the Tyr recombinase domain. Residues R152, K174, H245, R248, and H271 contribute to the active site. Residue Y280 is the O-(3'-phospho-DNA)-tyrosine intermediate of the active site.

It belongs to the 'phage' integrase family. XerD subfamily. In terms of assembly, forms a cyclic heterotetrameric complex composed of two molecules of XerC and two molecules of XerD.

The protein localises to the cytoplasm. Site-specific tyrosine recombinase, which acts by catalyzing the cutting and rejoining of the recombining DNA molecules. The XerC-XerD complex is essential to convert dimers of the bacterial chromosome into monomers to permit their segregation at cell division. It also contributes to the segregational stability of plasmids. This is Tyrosine recombinase XerD from Chlamydia muridarum (strain MoPn / Nigg).